Consider the following 823-residue polypeptide: Endoplasmin homolog (823 aa).

Positions 1–23 (MRKRTLVSVLFLFSLLFLLPDQG) are cleaved as a signal peptide. The segment at 29–60 (NAEESSDDVTDPPKVEEKIGGHGGLSTDSDVV) is disordered. Residues 39–48 (DPPKVEEKIG) are compositionally biased toward basic and acidic residues. ATP contacts are provided by residues E106, N110, D154, M159, N167, K173, 174 to 175 (SG), 194 to 199 (QFGVGF), F199, and T246. N-linked (GlcNAc...) asparagine glycosylation occurs at N110. The disordered stretch occupies residues 289–328 (ETEVPVEEDESADEETETTSTEEEKEEDAEEEDGEKKQKT). Positions 290–321 (TEVPVEEDESADEETETTSTEEEKEEDAEEED) are enriched in acidic residues. N-linked (GlcNAc...) asparagine glycans are attached at residues N452 and N620. Over residues 777-792 (VADEEIEAAEEPETSE) the composition is skewed to acidic residues. The tract at residues 777 to 823 (VADEEIEAAEEPETSEATETKSDDLAGGLNIEAEPVEQQEENTKDEL) is disordered. The short motif at 820-823 (KDEL) is the Prevents secretion from ER element.

This sequence belongs to the heat shock protein 90 family. In terms of assembly, interacts with FKBP42. Interacts with P23-1. As to expression, ubiquitous.

The protein localises to the endoplasmic reticulum lumen. Functionally, may have a molecular chaperone role in the processing of secreted materials. Required for shoot apical meristem (SAM), root apical meristem (RAM) and floral meristem (FM) formation, probably by regulating the folding of CLAVATA proteins (CLVs). Also involved in pollen tube elongation. Involved in resistance to tunicamycin- or high calcium-induced ER stresses. Possesses ATPase activity. This chain is Endoplasmin homolog, found in Arabidopsis thaliana (Mouse-ear cress).